The following is a 358-amino-acid chain: 3-dehydroquinate synthase (358 aa).

NAD(+)-binding positions include 70–75 (DGEQFK), 104–108 (GVIGD), 128–129 (TT), K141, K150, and 168–171 (CLHT). Zn(2+) contacts are provided by E183, H246, and H263.

This sequence belongs to the sugar phosphate cyclases superfamily. Dehydroquinate synthase family. Co(2+) is required as a cofactor. It depends on Zn(2+) as a cofactor. The cofactor is NAD(+).

It is found in the cytoplasm. The catalysed reaction is 7-phospho-2-dehydro-3-deoxy-D-arabino-heptonate = 3-dehydroquinate + phosphate. It participates in metabolic intermediate biosynthesis; chorismate biosynthesis; chorismate from D-erythrose 4-phosphate and phosphoenolpyruvate: step 2/7. Its function is as follows. Catalyzes the conversion of 3-deoxy-D-arabino-heptulosonate 7-phosphate (DAHP) to dehydroquinate (DHQ). The chain is 3-dehydroquinate synthase from Shewanella baltica (strain OS185).